The following is a 182-amino-acid chain: MYPILVNSLLTCPIVKKGEYNYFVHPITDGIPDIDPGLLREIAVGMIRLLDLTDVKYIVTAEAMGIPIATAISLMTDIPVNIIRKRKYGLPGECDVCQVTGYSKGEMYINGICTGDRIVIVDDVISTGGTMNGIIKSLQSIGAEIADIGFVIKKGNPSLKLPYSYLVSIEVTDRVRIIDQSF.

It belongs to the purine/pyrimidine phosphoribosyltransferase family. Archaeal HPRT subfamily. Homodimer.

The protein localises to the cytoplasm. It carries out the reaction IMP + diphosphate = hypoxanthine + 5-phospho-alpha-D-ribose 1-diphosphate. It catalyses the reaction GMP + diphosphate = guanine + 5-phospho-alpha-D-ribose 1-diphosphate. It participates in purine metabolism; IMP biosynthesis via salvage pathway; IMP from hypoxanthine: step 1/1. Catalyzes a salvage reaction resulting in the formation of IMP that is energically less costly than de novo synthesis. This is Hypoxanthine/guanine phosphoribosyltransferase from Methanospirillum hungatei JF-1 (strain ATCC 27890 / DSM 864 / NBRC 100397 / JF-1).